The following is a 364-amino-acid chain: Alanine racemase (364 aa).

The Proton acceptor; specific for D-alanine role is filled by Lys-35. An N6-(pyridoxal phosphate)lysine modification is found at Lys-35. A substrate-binding site is contributed by Arg-130. Tyr-256 serves as the catalytic Proton acceptor; specific for L-alanine. Met-304 lines the substrate pocket.

It belongs to the alanine racemase family. Requires pyridoxal 5'-phosphate as cofactor.

It carries out the reaction L-alanine = D-alanine. It participates in amino-acid biosynthesis; D-alanine biosynthesis; D-alanine from L-alanine: step 1/1. Its function is as follows. Catalyzes the interconversion of L-alanine and D-alanine. May also act on other amino acids. The chain is Alanine racemase (alr) from Polaromonas sp. (strain JS666 / ATCC BAA-500).